The primary structure comprises 150 residues: Catabolic 3-dehydroquinase (150 aa).

Tyrosine 24 functions as the Proton acceptor in the catalytic mechanism. Substrate contacts are provided by asparagine 75, histidine 81, and aspartate 88. Residue histidine 101 is the Proton donor of the active site. Substrate is bound by residues 102–103 and arginine 112; that span reads IS.

It belongs to the type-II 3-dehydroquinase family. As to quaternary structure, homododecamer. Adopts a ring-like structure, composed of an arrangement of two hexameric rings stacked on top of one another.

The enzyme catalyses 3-dehydroquinate = 3-dehydroshikimate + H2O. Its pathway is aromatic compound metabolism; 3,4-dihydroxybenzoate biosynthesis; 3,4-dihydroxybenzoate from 3-dehydroquinate: step 1/2. Its function is as follows. Is involved in the catabolism of quinate. Allows the utilization of quinate as carbon source via the beta-ketoadipate pathway. The chain is Catabolic 3-dehydroquinase from Verticillium alfalfae (strain VaMs.102 / ATCC MYA-4576 / FGSC 10136) (Verticillium wilt of alfalfa).